The chain runs to 487 residues: DNA-dependent metalloprotease SPRTN (487 aa).

Met1 carries the N-acetylmethionine modification. A SprT-like domain is found at 45-212 (LQGLFVLFND…KTCGGTYIKI (168 aa)). Position 111 (His111) interacts with Zn(2+). The active site involves Glu112. The Zn(2+) site is built by His115 and His130. The interval 219–248 (SKKGKGKTKLRKQPVSEAENKDKPNRGEKQ) is disordered. The span at 220 to 230 (KKGKGKTKLRK) shows a compositional bias: basic residues. Lys230 carries the post-translational modification N6-acetyllysine. Basic and acidic residues predominate over residues 236–247 (AENKDKPNRGEK). Positions 253–261 (FTGKGYVLG) match the SHP-box motif. Ser267 is modified (phosphoserine). The span at 280 to 289 (SQEPLSQDHS) shows a compositional bias: polar residues. Residues 280–317 (SQEPLSQDHSANALRPHSKTEVKFEQNGPSKKTSVASP) form a disordered region. Residue Lys302 forms a Glycyl lysine isopeptide (Lys-Gly) (interchain with G-Cter in SUMO2) linkage. Residues 306 to 317 (NGPSKKTSVASP) show a composition bias toward polar residues. The short motif at 324-331 (QNVLSNYF) is the PIP-box element. A Glycyl lysine isopeptide (Lys-Gly) (interchain with G-Cter in SUMO2); alternate cross-link involves residue Lys340. A Glycyl lysine isopeptide (Lys-Gly) (interchain with G-Cter in ubiquitin); alternate cross-link involves residue Lys340. Residues 347-379 (GSPVKSLTVGDSTTKSVSAGSQRRVTSSRTSLR) form a disordered region. Position 373 is a phosphoserine (Ser373). The Nuclear localization signal signature appears at 401–412 (GKLPSKRPRIED). Lys413 is covalently cross-linked (Glycyl lysine isopeptide (Lys-Gly) (interchain with G-Cter in ubiquitin)). Residues Lys422 and Lys423 each participate in a glycyl lysine isopeptide (Lys-Gly) (interchain with G-Cter in SUMO2) cross-link. The disordered stretch occupies residues 427-455 (QSGGGDVTSSSHPPAAAQSPSGASGQSRV). Over residues 435-453 (SSSHPPAAAQSPSGASGQS) the composition is skewed to low complexity. Residues 455–482 (VVHCPVCQDEVSETQINEHLDWCLERDS) form a UBZ4-type zinc finger. Zn(2+) contacts are provided by Cys458, Cys461, His473, and Cys477. Lys486 is covalently cross-linked (Glycyl lysine isopeptide (Lys-Gly) (interchain with G-Cter in SUMO2)).

It belongs to the Spartan family. Homodimer. Interacts (VIA PIP-box) with PCNA (when ubiquitinated). Interacts (via its SHP-box) with VCP/p97. Interacts with RAD18. Interacts with KCTD13 and POLD3. Requires Zn(2+) as cofactor. Post-translationally, autocatalytically cleaved in response to double-stranded DNA-binding: autocatalytic cleavage takes place in trans and leads to inactivation. In terms of processing, monoubiquitinated; monoubiquitination promotes exclusion from chromatin. Deubiquitinated by VCPIP1: deubiquitination is required for subsequent acetylation and recruitment to chromatin and DNA damage sites. Acetylated following deubiquitination by VCPIP1, leading to recruitment to chromatin and DNA damage sites. Post-translationally, phosphorylation by CHEK1 promotes recruitment to chromatin.

It localises to the nucleus. The protein localises to the chromosome. Its activity is regulated as follows. DNA-binding activates the protease activity: single-stranded DNA-binding specifically activates ability to cleave covalent DNA-protein cross-links (DPCs). In contrast, double-stranded DNA-binding specifically activates autocatalytic cleavage, and subsequent inactivation. Its function is as follows. DNA-dependent metalloendopeptidase that mediates the proteolytic cleavage of covalent DNA-protein cross-links (DPCs) during DNA synthesis, thereby playing a key role in maintaining genomic integrity. DPCs are highly toxic DNA lesions that interfere with essential chromatin transactions, such as replication and transcription, and which are induced by reactive agents, such as UV light or formaldehyde. Associates with the DNA replication machinery and specifically removes DPCs during DNA synthesis. Catalyzes proteolytic cleavage of the HMCES DNA-protein cross-link following unfolding by the BRIP1/FANCJ helicase. Acts as a pleiotropic protease for DNA-binding proteins cross-linked with DNA, such as TOP1, TOP2A, histones H3 and H4. Mediates degradation of DPCs that are not ubiquitinated, while it is not able to degrade ubiquitinated DPCs. SPRTN activation requires polymerase collision with DPCs followed by helicase bypass of DPCs. Involved in recruitment of VCP/p97 to sites of DNA damage. Also acts as an activator of CHEK1 during normal DNA replication by mediating proteolytic cleavage of CHEK1, thereby promoting CHEK1 removal from chromatin and subsequent activation. Does not activate CHEK1 in response to DNA damage. May also act as a 'reader' of ubiquitinated PCNA: recruited to sites of UV damage and interacts with ubiquitinated PCNA and RAD18, the E3 ubiquitin ligase that monoubiquitinates PCNA. Facilitates chromatin association of RAD18 and is required for efficient PCNA monoubiquitination, promoting a feed-forward loop to enhance PCNA ubiquitination and translesion DNA synthesis. This is DNA-dependent metalloprotease SPRTN from Bos taurus (Bovine).